The sequence spans 431 residues: Protein EARLY STARVATION 1, chloroplastic (431 aa).

The transit peptide at 1–19 (MAACSRGLVARPFDLTARG) directs the protein to the chloroplast. 2 disordered regions span residues 65–126 (GNKP…DTGI) and 403–431 (GVYPTIDFSASSPAPPSDDPPGMPPSPLE). Positions 415-431 (PAPPSDDPPGMPPSPLE) are enriched in pro residues.

It belongs to the ESV1 family.

The protein localises to the plastid. Its subcellular location is the chloroplast stroma. Binds preferentially to highly ordered alpha-glucans, such as starch and crystalline maltodextrins. Involved in the organization of the starch granule matrix, thus influencing starch turnover by modulating the accessibility of starch polymers to modifying and degrading enzymes. Required for the control of starch degradation in leaves and starch distribution in nonphotosynthetic parts. Promotes gravitropic responses, negative in shoots but positive in roots, by facilitating starch granules (statoliths) formation in hypocotyls and roots columella. Facilitates tight packing of starch granules in grains. The protein is Protein EARLY STARVATION 1, chloroplastic of Oryza sativa subsp. indica (Rice).